The following is a 540-amino-acid chain: Calnexin homolog (540 aa).

The N-terminal stretch at 1–29 (MELSRRKMCCYIQFCCFVLIGCFISQICA) is a signal peptide. The Lumenal segment spans residues 30 to 469 (SSDAIFYESF…EKAETQPNIT (440 aa)). Residues S38 and D69 each contribute to the Ca(2+) site. C112 and C147 are joined by a disulfide. 4 residues coordinate an alpha-D-glucoside: Y116, K118, Y138, and D145. The segment at 221–301 (LIPTKTIPDP…DWDDEEDGEW (81 aa)) is disordered. The p domain (Extended arm) stretch occupies residues 227 to 360 (IPDPDDKKPE…REIPNPDYFE (134 aa)). Basic and acidic residues predominate over residues 228–253 (PDPDDKKPEDWDERAKIPDPEATKPD). Tandem repeats lie at residues 229–240 (DPDDKKPEDWDE), 246–257 (DPEATKPDDWDE), 265–276 (DEEAEKPEGWLD), 284–295 (DPEAVKPEDWDD), and 299–309 (GEWEAPQIENP). 4 X approximate repeats regions lie at residues 229-295 (DPDD…DWDD) and 299-356 (GEWE…IPNP). 2 stretches are compositionally biased toward acidic residues: residues 254-285 (DWDE…IDDP) and 292-301 (DWDDEEDGEW). Cysteines 311 and 317 form a disulfide. Repeat copies occupy residues 318-328 (GEWRRPLKRNP), 332-342 (GKWHAPLIDNP), and 346-356 (GIWKPREIPNP). E375 provides a ligand contact to an alpha-D-glucoside. D386 is a binding site for Ca(2+). A glycan (N-linked (GlcNAc...) asparagine) is linked at N467. The helical transmembrane segment at 470–490 (IGVIVSIIVVIFSILLKLLFG) threads the bilayer. The Cytoplasmic segment spans residues 491 to 540 (GKKAAPKVNVVPKKKEEPEASNTAEVREGEEEKTEGEVAAAPRRRPRRDT). A disordered region spans residues 499–540 (NVVPKKKEEPEASNTAEVREGEEEKTEGEVAAAPRRRPRRDT).

It belongs to the calreticulin family.

The protein resides in the endoplasmic reticulum membrane. Functionally, calcium-binding protein that interacts with newly synthesized monoglucosylated glycoproteins in the endoplasmic reticulum. It may act in assisting protein assembly and/or in the retention within the ER of unassembled protein subunits. It seems to play a major role in the quality control apparatus of the ER by the retention of incorrectly folded proteins. This chain is Calnexin homolog, found in Helianthus tuberosus (Jerusalem artichoke).